Here is a 391-residue protein sequence, read N- to C-terminus: Matrix metalloproteinase-23 (391 aa).

Topologically, residues 1–19 are cytoplasmic; it reads MGWRACLRPEASGAVQGRW. The propeptide occupies 1-79; that stretch reads MGWRACLRPE…LSMLVTRRRR (79 aa). Residues 20 to 38 form a helical; Signal-anchor for type II membrane protein membrane-spanning segment; the sequence is LGAVLSGLCLLSALAFLEW. The Lumenal segment spans residues 39–391; sequence LGSPTETAWN…TYSWRVRVRS (353 aa). 2 N-linked (GlcNAc...) asparagine glycosylation sites follow: Asn-93 and Asn-149. His-212 provides a ligand contact to Zn(2+). Glu-213 is an active-site residue. Zn(2+) contacts are provided by His-216 and His-222. The N-linked (GlcNAc...) asparagine glycan is linked to Asn-233. The 35-residue stretch at 256–290 folds into the ShKT domain; sequence CLDRIFVCTSWARKGFCDVRQRLMKRLCPRSCDFC. Disulfide bonds link Cys-256-Cys-290, Cys-263-Cys-283, and Cys-272-Cys-287. In terms of domain architecture, Ig-like C2-type spans 296–381; sequence PTVATTTSPT…VVRHRQRVLT (86 aa). N-linked (GlcNAc...) asparagine glycosylation occurs at Asn-317. Cys-322 and Cys-371 form a disulfide bridge.

The protein belongs to the peptidase M10A family. Zn(2+) serves as cofactor. In terms of processing, N-glycosylated. Post-translationally, proteolytic cleavage might yield an active form. In terms of tissue distribution, expressed at the highest levels in ovary and uterus. In ovary expression is strictly confined to granulosa cells of preantral and small antral follicles. Detected also in testis and prostate.

Its subcellular location is the membrane. The protein localises to the endoplasmic reticulum membrane. Its activity is regulated as follows. Inhibited by TIMP2. Functionally, protease. May regulate the surface expression of some potassium channels by retaining them in the endoplasmic reticulum. This is Matrix metalloproteinase-23 (Mmp23) from Rattus norvegicus (Rat).